The following is a 398-amino-acid chain: Nicotinate phosphoribosyltransferase (398 aa).

His-214 carries the post-translational modification Phosphohistidine; by autocatalysis.

Belongs to the NAPRTase family. Transiently phosphorylated on a His residue during the reaction cycle. Phosphorylation strongly increases the affinity for substrates and increases the rate of nicotinate D-ribonucleotide production. Dephosphorylation regenerates the low-affinity form of the enzyme, leading to product release.

The catalysed reaction is nicotinate + 5-phospho-alpha-D-ribose 1-diphosphate + ATP + H2O = nicotinate beta-D-ribonucleotide + ADP + phosphate + diphosphate. It functions in the pathway cofactor biosynthesis; NAD(+) biosynthesis; nicotinate D-ribonucleotide from nicotinate: step 1/1. Functionally, catalyzes the synthesis of beta-nicotinate D-ribonucleotide from nicotinate and 5-phospho-D-ribose 1-phosphate at the expense of ATP. In Xanthomonas campestris pv. campestris (strain 8004), this protein is Nicotinate phosphoribosyltransferase.